A 447-amino-acid chain; its full sequence is MHIPTAAPAPAKPLPIYRQLYFQVIVAIVLGAILGHYEPLVGEKMKPLGDAFINLVKMIIAPVIFLTIVTGIASMTHLRTVGRVFAKAMAYFLFFSTLALIVGMIVAHVVQPGAGMNINPAELDQTAVHSYVEKSHDLTLVGFLMDIIPKTLVSAFVDGNILQVLFIAVLFGIALASVGEKGKPILNFLEALVAPVFKLVHILMKAAPIGAFGAIAFTIGKYGVGSLVNLAWLVGSFYLTAFLFVAVILGVVCRLCGFSVFKLARYLKAELLLVLGTSSSESALPSLMEKMERAGCSKSVVGLVVPTGYSFNLDGTNIYMTLAALFIAQATNTELTLGHQIALLLVAMLSSKGAAGVTGAGFITLAATLAVVPEVPVAGMALILGVDRFMSECRSLTNFIGNAVATVVVSRWEGALDRNRLQLALDGRESELPPPIDVVPEALPAKG.

A run of 8 helical transmembrane segments spans residues 22–42 (FQVI…PLVG), 52–72 (FINL…VTGI), 90–110 (AYFL…AHVV), 159–179 (GNIL…ASVG), 199–219 (LVHI…AFTI), 232–252 (WLVG…LGVV), 325–347 (LFIA…LLVA), and 366–386 (AATL…ILGV).

This sequence belongs to the dicarboxylate/amino acid:cation symporter (DAACS) (TC 2.A.23) family.

The protein resides in the cell inner membrane. In terms of biological role, responsible for the transport of dicarboxylates such as succinate, fumarate, and malate from the periplasm across the membrane. This chain is C4-dicarboxylate transport protein, found in Stenotrophomonas maltophilia (strain R551-3).